A 248-amino-acid polypeptide reads, in one-letter code: Large ribosomal subunit protein uL30A (248 aa).

Residues 1-44 (MSQKKQKIQVEQKVPENVAKKTQRDSKLRDAVAKRRTERLAANK) form a disordered region. Residues 8 to 41 (IQVEQKVPENVAKKTQRDSKLRDAVAKRRTERLA) are compositionally biased toward basic and acidic residues.

The protein belongs to the universal ribosomal protein uL30 family.

In terms of biological role, binds to G-rich structures in 28S rRNA and in mRNAs. Plays a regulatory role in the translation apparatus; inhibits cell-free translation of mRNAs. The sequence is that of Large ribosomal subunit protein uL30A (Rpl7-1) from Paramecium tetraurelia.